Reading from the N-terminus, the 720-residue chain is Calcium/calmodulin-dependent protein kinase type II (720 aa).

The region spanning 12–269 (YDVKEELGKG…ADQALKVPWI (258 aa)) is the Protein kinase domain. Residues 18-26 (LGKGAFSVV) and K41 each bind ATP. The Proton acceptor role is filled by D134. A Phosphothreonine; by autocatalysis modification is found at T284. Disordered stretches follow at residues 317 to 345 (SDST…QPTS) and 504 to 586 (DNLS…NLSA). Composition is skewed to polar residues over residues 504-514 (DNLSASTSSDL) and 526-540 (PPST…SQTI). Positions 569 to 586 (SSSNSSTASKSSSTNLSA) are enriched in low complexity.

This sequence belongs to the protein kinase superfamily. CAMK Ser/Thr protein kinase family. CaMK subfamily. Dodecamer. Subunits are tightly packed around a central ring-shaped scaffold with extensive contacts between the regulatory segment of one kinase and the catalytic domain of another enabling cooperative activation of a subunit by the adjacent molecule. Interacts with and phosphorylates daf-16; the interaction promotes daf-16 nuclear localization. Interacts with egl-2 and tir-1. Interacts with nsy-1. Mg(2+) is required as a cofactor. As to expression, expressed in the nervous system. Observed in the ADF and AWC neurons. Position in AWC neurons is regulated by microtubules. Localized to clusters in ventral cord neurites which appear to be required for glr-1 trafficking. Also present in oocytes.

Its subcellular location is the cytoplasm. The protein resides in the cell projection. It is found in the axon. The protein localises to the perikaryon. The enzyme catalyses L-seryl-[protein] + ATP = O-phospho-L-seryl-[protein] + ADP + H(+). It catalyses the reaction L-threonyl-[protein] + ATP = O-phospho-L-threonyl-[protein] + ADP + H(+). Ca2(+)/calmodulin binding removes an autoinhibitory regulatory segment located C-terminal to the kinase domain. This releases the catalytic activity of the enzyme and makes accessible a regulatory residue Thr-284. Phosphorylation of Thr-284 by another kinase domain within the oligomeric holoenzyme keeps CaMKII active in the absence of Ca(2+)/calmodulin by preventing the rebinding of the regulatory segment to the kinase domain and by increasing the affinity of calmodulin for the enzyme. Can respond to high-frequency Ca(2+) pulses to become Ca(2+) independent. Acts in the signaling of a variety of pathways and processes. Phosphorylates 'Ser-319' of daf-16 in response to stress signals, such as heat, starvation and oxidation, which plays a role in prolonging lifespan. Required for viability under chronic osmotic stress in which it acts downstream of osr-1. Has roles in locomotion, oocyte maturation, brood size, egg laying, defecation, meiotic maturation and neuronal cell fate specification. Required for the regulation of synaptic density and neuromuscular junction morphology. Regulates the synaptic trafficking of glr-1. Bidirectional modulator of neurotransmitter release with negative modulatory effects mainly mediated via slo-1 activation. Involved in activation of ADF neurons and increased tph-1 transcription following exposure to pathogenic bacteria which leads to learned olfactory aversion to the bacteria. Implicated in the muscle regulation of spicule protraction. In conjunction with egl-2 has a role in the suppression of mating behavior under food deprivation to encourage foraging. Involved in restricting str-2 expression to only one of the two AWC neurons. May suppress the functional response to an internal pacemaker, perhaps by modulating the activity of the IP3 receptor. The chain is Calcium/calmodulin-dependent protein kinase type II (unc-43) from Caenorhabditis elegans.